The sequence spans 145 residues: Ribosomal RNA large subunit methyltransferase H (145 aa).

S-adenosyl-L-methionine-binding positions include Leu-64, Gly-93, and 112 to 117; that span reads LSPLTF.

The protein belongs to the RNA methyltransferase RlmH family. Homodimer.

The protein localises to the cytoplasm. It carries out the reaction pseudouridine(1915) in 23S rRNA + S-adenosyl-L-methionine = N(3)-methylpseudouridine(1915) in 23S rRNA + S-adenosyl-L-homocysteine + H(+). Specifically methylates the pseudouridine at position 1915 (m3Psi1915) in 23S rRNA. In Prochlorococcus marinus (strain NATL1A), this protein is Ribosomal RNA large subunit methyltransferase H.